The following is a 311-amino-acid chain: Manganese-dependent ADP-ribose/CDP-alcohol diphosphatase (311 aa).

Zn(2+) contacts are provided by Asp17, Gln19, Asp64, Asn99, His218, His255, and His257.

The protein belongs to the ADPRibase-Mn family. Monomer. Mg(2+) serves as cofactor.

The catalysed reaction is CDP-choline + H2O = phosphocholine + CMP + 2 H(+). The enzyme catalyses ADP-D-ribose + H2O = D-ribose 5-phosphate + AMP + 2 H(+). It catalyses the reaction CDP-glycerol + H2O = sn-glycerol 3-phosphate + CMP + 2 H(+). Its function is as follows. Hydrolyzes ADP-ribose, IDP-ribose, CDP-glycerol, CDP-choline and CDP-ethanolamine, but not other non-reducing ADP-sugars or CDP-glucose. This Arabidopsis thaliana (Mouse-ear cress) protein is Manganese-dependent ADP-ribose/CDP-alcohol diphosphatase.